A 154-amino-acid polypeptide reads, in one-letter code: Endoribonuclease YbeY (154 aa).

The Zn(2+) site is built by histidine 120, histidine 124, and histidine 130.

This sequence belongs to the endoribonuclease YbeY family. It depends on Zn(2+) as a cofactor.

It localises to the cytoplasm. Functionally, single strand-specific metallo-endoribonuclease involved in late-stage 70S ribosome quality control and in maturation of the 3' terminus of the 16S rRNA. The protein is Endoribonuclease YbeY of Oceanobacillus iheyensis (strain DSM 14371 / CIP 107618 / JCM 11309 / KCTC 3954 / HTE831).